Consider the following 1358-residue polypeptide: Tenascin-R (1358 aa).

The N-terminal stretch at 1–31 (MGIDGETVVLKNMLIGVNLILLGSMLKPSEC) is a signal peptide. The disordered stretch occupies residues 37 to 58 (TERAQRQTVEEEGGASSYNTSS). N55 carries an N-linked (GlcNAc...) asparagine glycan. The stretch at 127 to 157 (CASSSQVLQELLSRIEMLEREVSLLRDQCNT) forms a coiled coil. S176 carries an O-linked (Xyl...) (chondroitin sulfate) serine glycan. N180 and N198 each carry an N-linked (GlcNAc...) asparagine glycan. EGF-like domains are found at residues 188–199 (CICNEGWFGKNC), 219–230 (CICDSEYSGDDC), and 250–261 (CVCEEPYTGEDC). O-linked (Xyl...) (chondroitin sulfate) serine glycosylation occurs at S271. The N-linked (GlcNAc...) asparagine glycan is linked to N278. One can recognise an EGF-like 4 domain in the interval 281-292 (CLCQEGYAGEDC). Disulfide bonds link C297–C307 and C314–C323. A glycan (O-linked (Xyl...) (chondroitin sulfate) serine) is linked at S302. Positions 312-323 (CICEEGYQGPDC) constitute an EGF-like 5 domain. 9 Fibronectin type-III domains span residues 328 to 420 (PPED…TPQG), 421 to 505 (LQFK…TVID), 506 to 597 (GPTQ…IDAP), 598 to 687 (KNLR…TELD), 688 to 777 (SPRD…FRPI), 778 to 865 (SHLH…TGID), 866 to 955 (PPKN…AMDS), 956 to 1042 (PMDL…TLLD), and 1043 to 1131 (PPDN…GGRV). 3 N-linked (GlcNAc...) asparagine glycosylation sites follow: N392, N470, and N581. The residue at position 724 (S724) is a Phosphoserine. N-linked (GlcNAc...) asparagine glycans are attached at residues N791, N869, N874, N1036, N1046, and N1261. A Fibrinogen C-terminal domain is found at 1129–1344 (GRVFSHPQDC…FVEMKMRPYI (216 aa)).

It belongs to the tenascin family. As to quaternary structure, interacts with BCAN and ACAN in a calcium-dependent manner. Interacts with SCN2B, PTPRZ1, and CSPG3. Forms oligomers. Isoforms 1 and 2 form respectively trimeric (tribrachion) and dimeric kink-armed rodlike structures, which are linked by disulfide bridges. Interacts with CNTN1, TNC and FN1. Contains N-linked oligosaccharides with a sulfated carbohydrate structures. Contains N-linked oligosaccharides, O-linked sialylated structures and O-linked chondroitin sulfate glycosaminoglycans. In terms of tissue distribution, brain-specific.

The protein localises to the secreted. The protein resides in the extracellular space. It localises to the extracellular matrix. Its function is as follows. Neural extracellular matrix (ECM) protein involved in interactions with different cells and matrix components. Theses interactions can influence cellular behavior by either evoking a stable adhesion and differentiation, or repulsion and inhibition of neurite growth. Binding to cell surface gangliosides inhibits RGD-dependent integrin-mediated cell adhesion and results in an inhibition of PTK2/FAK1 (FAK) phosphorylation and cell detachment. Binding to membrane surface sulfatides results in a oligodendrocyte adhesion and differentiation. Interaction with CNTN1 induces a repulsion of neurons and an inhibition of neurite outgrowth. Interacts with SCN2B may play a crucial role in clustering and regulation of activity of sodium channels at nodes of Ranvier. TNR-linked chondroitin sulfate glycosaminoglycans are involved in the interaction with FN1 and mediates inhibition of cell adhesion and neurite outgrowth. The highly regulated addition of sulfated carbohydrate structure may modulate the adhesive properties of TNR over the course of development and during synapse maintenance. The chain is Tenascin-R (Tnr) from Mus musculus (Mouse).